The following is a 566-amino-acid chain: Folate-like transporter DDB_G0272544 (566 aa).

Residues 24-81 adopt a coiled-coil conformation; it reads RNQDEDENENENNDNLENDNNKRNYISINNYEPYKEIDNNNNKNNNNNNIINNNNKIN. A disordered region spans residues 25 to 46; that stretch reads NQDEDENENENNDNLENDNNKR. Acidic residues predominate over residues 27 to 40; that stretch reads DEDENENENNDNLE. The next 11 membrane-spanning stretches (helical) occupy residues 148 to 168, 171 to 191, 194 to 214, 226 to 246, 252 to 272, 304 to 324, 332 to 352, 364 to 384, 388 to 408, 420 to 440, and 458 to 478; these read VFLLIFGILGEIIGYKVIIII, VAKILTIGVLLSTNNIIWMIL, ITEGLSYSAYTVFLAYIYFSL, VNAGYLVGIVSSGLLGQLLVE, VYLLSIACGTNILALILALGF, IWSGIAISIHQIVITYWQNLF, SWNGYISASAYFFASFFAIIP, GIILVLFGLLGGGLLVLMGFG, VVSALSFIIYNCCFEFVSPIV, IGVLFSFNIMVALTIQVLVQS, and YGACLFFLSFGFAILFGFLFL. Residues 517–544 adopt a coiled-coil conformation; the sequence is YNANIIDFENNNNNNNNNNNNNNNNNNN. Residues 526–556 are compositionally biased toward low complexity; the sequence is NNNNNNNNNNNNNNNNNNNNNNNNNNNNNNN. The disordered stretch occupies residues 526 to 566; that stretch reads NNNNNNNNNNNNNNNNNNNNNNNNNNNNNNNVGIGGNDNFK.

This sequence belongs to the reduced folate carrier (RFC) transporter (TC 2.A.48) family.

Its subcellular location is the membrane. In terms of biological role, folate transporter. The sequence is that of Folate-like transporter DDB_G0272544 from Dictyostelium discoideum (Social amoeba).